Reading from the N-terminus, the 320-residue chain is Ferrochelatase (320 aa).

Fe cation contacts are provided by histidine 194 and glutamate 275.

This sequence belongs to the ferrochelatase family. As to quaternary structure, monomer.

The protein localises to the cytoplasm. It catalyses the reaction heme b + 2 H(+) = protoporphyrin IX + Fe(2+). The protein operates within porphyrin-containing compound metabolism; protoheme biosynthesis; protoheme from protoporphyrin-IX: step 1/1. Functionally, catalyzes the ferrous insertion into protoporphyrin IX. This is Ferrochelatase from Escherichia coli (strain 55989 / EAEC).